Consider the following 266-residue polypeptide: Ubiquinone biosynthesis protein COQ4 homolog, mitochondrial (266 aa).

Histidine 169, aspartate 170, histidine 173, and glutamate 185 together coordinate Zn(2+).

The protein belongs to the COQ4 family. As to quaternary structure, component of a multi-subunit COQ enzyme complex. It depends on Zn(2+) as a cofactor.

The protein resides in the mitochondrion inner membrane. It carries out the reaction a 4-hydroxy-3-methoxy-5-(all-trans-polyprenyl)benzoate + H(+) = a 2-methoxy-6-(all-trans-polyprenyl)phenol + CO2. Its pathway is cofactor biosynthesis; ubiquinone biosynthesis. Functionally, lyase that catalyzes the C1-decarboxylation of 4-hydroxy-3-methoxy-5-(all-trans-polyprenyl)benzoic acid into 2-methoxy-6-(all-trans-polyprenyl)phenol during ubiquinone biosynthesis. The protein is Ubiquinone biosynthesis protein COQ4 homolog, mitochondrial of Drosophila ananassae (Fruit fly).